Here is a 684-residue protein sequence, read N- to C-terminus: U4/U6 small nuclear ribonucleoprotein Prp3 (684 aa).

The region spanning 1–87 (MSLSKRELDE…HSKSNSDRNR (87 aa)) is the PWI domain. Basic and acidic residues predominate over residues 73 to 107 (GRSSRHSKSNSDRNRKRELKDVFGDDSEVSKESSG). Disordered regions lie at residues 73-109 (GRSS…SGVK) and 162-183 (FISP…RLPI). Residues 170-183 (PKISSSSQSERLPI) are compositionally biased toward polar residues.

As to quaternary structure, component of the precatalytic spliceosome (spliceosome B complex). Component of the U4/U6-U5 tri-snRNP complex, a building block of the precatalytic spliceosome (spliceosome B complex). The U4/U6-U5 tri-snRNP complex is composed of the U4, U6 and U5 snRNAs and at least PRPF3, PRPF4, PRPF6, PRPF8, PRPF31, SNRNP200, TXNL4A, SNRNP40, SNRPB, SNRPD1, SNRPD2, SNRPD3, SNRPE, SNRPF, SNRPG, DDX23, CD2BP2, PPIH, SNU13, EFTUD2, SART1 and USP39, plus LSM2, LSM3, LSM4, LSM5, LSM6, LSM7 and LSM8.

Its subcellular location is the nucleus. It is found in the nucleus speckle. Functionally, plays a role in pre-mRNA splicing as component of the U4/U6-U5 tri-snRNP complex that is involved in spliceosome assembly, and as component of the precatalytic spliceosome (spliceosome B complex). The chain is U4/U6 small nuclear ribonucleoprotein Prp3 (PRPF3) from Gallus gallus (Chicken).